We begin with the raw amino-acid sequence, 103 residues long: GIISLILQIGNIISIWVSHSIQTGSQNHTGICNQRIITYENSTWVNQTYVNISNTNVVAGKDTTSMTLAGNSSLCPIRGWAIYSKDNSIRIGSKGDVFVIREP.

A helical; Signal-anchor for type II membrane protein membrane pass occupies residues Gly-1 to Ser-18. Topologically, residues His-19 to Pro-103 are virion surface. N-linked (GlcNAc...) asparagine; by host glycosylation is found at Asn-27, Asn-41, Asn-46, Asn-51, and Asn-71. Arg-101 contacts substrate.

The protein belongs to the glycosyl hydrolase 34 family. As to quaternary structure, homotetramer. Requires Ca(2+) as cofactor. N-glycosylated.

The protein localises to the virion membrane. Its subcellular location is the host apical cell membrane. It catalyses the reaction Hydrolysis of alpha-(2-&gt;3)-, alpha-(2-&gt;6)-, alpha-(2-&gt;8)- glycosidic linkages of terminal sialic acid residues in oligosaccharides, glycoproteins, glycolipids, colominic acid and synthetic substrates.. Inhibited by the neuraminidase inhibitors zanamivir (Relenza) and oseltamivir (Tamiflu). These drugs interfere with the release of progeny virus from infected cells and are effective against all influenza strains. Resistance to neuraminidase inhibitors is quite rare. In terms of biological role, catalyzes the removal of terminal sialic acid residues from viral and cellular glycoconjugates. Cleaves off the terminal sialic acids on the glycosylated HA during virus budding to facilitate virus release. Additionally helps virus spread through the circulation by further removing sialic acids from the cell surface. These cleavages prevent self-aggregation and ensure the efficient spread of the progeny virus from cell to cell. Otherwise, infection would be limited to one round of replication. Described as a receptor-destroying enzyme because it cleaves a terminal sialic acid from the cellular receptors. May facilitate viral invasion of the upper airways by cleaving the sialic acid moieties on the mucin of the airway epithelial cells. Likely to plays a role in the budding process through its association with lipid rafts during intracellular transport. May additionally display a raft-association independent effect on budding. Plays a role in the determination of host range restriction on replication and virulence. Sialidase activity in late endosome/lysosome traffic seems to enhance virus replication. The sequence is that of Neuraminidase (NA) from Influenza A virus (strain A/Camel/Mongolia/1982 H1N1).